The chain runs to 238 residues: tRNA (guanine-N(7)-)-methyltransferase (238 aa).

S-adenosyl-L-methionine-binding residues include E68, E93, D120, and D143. D143 is an active-site residue. Residues K147, D179, and 216 to 219 (TKFE) contribute to the substrate site.

It belongs to the class I-like SAM-binding methyltransferase superfamily. TrmB family.

The catalysed reaction is guanosine(46) in tRNA + S-adenosyl-L-methionine = N(7)-methylguanosine(46) in tRNA + S-adenosyl-L-homocysteine. The protein operates within tRNA modification; N(7)-methylguanine-tRNA biosynthesis. Catalyzes the formation of N(7)-methylguanine at position 46 (m7G46) in tRNA. This Ectopseudomonas mendocina (strain ymp) (Pseudomonas mendocina) protein is tRNA (guanine-N(7)-)-methyltransferase.